An 88-amino-acid chain; its full sequence is Small ribosomal subunit protein bS20 (88 aa).

Residues 1–20 (MANTKSARKSLIKSKQQRKC) are disordered.

Belongs to the bacterial ribosomal protein bS20 family.

Binds directly to 16S ribosomal RNA. This Blochmanniella pennsylvanica (strain BPEN) protein is Small ribosomal subunit protein bS20.